A 184-amino-acid chain; its full sequence is Female-specific protein transformer (184 aa).

Basic and acidic residues-rich tracts occupy residues 1–39 (MKMD…DSRK) and 49–58 (DEVREQDRIR). 2 disordered regions span residues 1–123 (MKMD…PKII) and 146–184 (YQRL…RPPY). 2 stretches are compositionally biased toward basic residues: residues 59–75 (SLRQ…RSRS) and 84–114 (SRHR…RSPH). A compositionally biased stretch (pro residues) spans 150 to 159 (PRPPPFPPAP).

It localises to the nucleus speckle. Its function is as follows. Member of the regulatory pathway controlling female somatic sexual differentiation, regulated by Sxl. Activates dsx female-specific splicing by promoting the formation of a splicing enhancer complex which consists of tra, tra2 and sr proteins. This chain is Female-specific protein transformer (tra), found in Drosophila simulans (Fruit fly).